The sequence spans 598 residues: NADH-quinone oxidoreductase subunit C/D (598 aa).

Residues 1–189 are NADH dehydrogenase I subunit C; the sequence is MTDLTTSDST…DPFVLTKQKE (189 aa). The tract at residues 213–598 is NADH dehydrogenase I subunit D; it reads DFMFLNLGPN…IDFVMSDVDR (386 aa).

This sequence in the N-terminal section; belongs to the complex I 30 kDa subunit family. The protein in the C-terminal section; belongs to the complex I 49 kDa subunit family. As to quaternary structure, NDH-1 is composed of 13 different subunits. Subunits NuoB, CD, E, F, and G constitute the peripheral sector of the complex.

The protein localises to the cell inner membrane. The catalysed reaction is a quinone + NADH + 5 H(+)(in) = a quinol + NAD(+) + 4 H(+)(out). In terms of biological role, NDH-1 shuttles electrons from NADH, via FMN and iron-sulfur (Fe-S) centers, to quinones in the respiratory chain. The immediate electron acceptor for the enzyme in this species is believed to be ubiquinone. Couples the redox reaction to proton translocation (for every two electrons transferred, four hydrogen ions are translocated across the cytoplasmic membrane), and thus conserves the redox energy in a proton gradient. The chain is NADH-quinone oxidoreductase subunit C/D from Yersinia enterocolitica serotype O:8 / biotype 1B (strain NCTC 13174 / 8081).